Here is a 454-residue protein sequence, read N- to C-terminus: F-box/WD repeat-containing protein 2 (454 aa).

The F-box domain occupies 54–101 (RDFLKLLPLELSFYLLKWLDPQTLLTCCLVSKQWNKVISACTEVWQTA). WD repeat units lie at residues 139–175 (FETS…LWDV), 179–213 (QCVY…CWEW), 217–255 (ARTQ…VWAL), 259–306 (TCLN…IWPI), 313–352 (KCLK…QWDF), 364–403 (PEIA…RWPL), and 410–452 (KRGS…LWKE). K298 carries the N6-acetyllysine modification.

As to quaternary structure, directly interacts with SKP1 and CUL1.

Substrate-recognition component of the SCF (SKP1-CUL1-F-box protein)-type E3 ubiquitin ligase complex. The sequence is that of F-box/WD repeat-containing protein 2 (FBXW2) from Homo sapiens (Human).